The primary structure comprises 330 residues: G-protein coupled receptor 74 (330 aa).

7 helical membrane passes run 50 to 70 (LIVV…NLWL), 85 to 105 (FILI…IFSI), 121 to 141 (MVVF…LCFD), 160 to 180 (WVFC…QKAL), 210 to 230 (VAVS…CIFY), 252 to 272 (MLLF…LSFI), and 295 to 315 (LPLL…IYIL). Cys-117 and Cys-195 form a disulfide bridge.

This sequence belongs to the G-protein coupled receptor 1 family.

It localises to the host membrane. This Equus caballus (Horse) protein is G-protein coupled receptor 74 (74).